The primary structure comprises 926 residues: Glycogenin (926 aa).

UDP is bound by residues Leu10, Thr12, Tyr16, and Arg85. 13 residues coordinate UDP-alpha-D-glucose: Leu10, Thr12, Tyr16, Arg85, Lys94, Asp111, Ala112, Asp113, Asn145, Ser146, Asp184, Asp187, and Gln188. UDP is bound by residues Asp111, Ala112, and Asp113. Position 111 (Asp111) interacts with Mn(2+). Asp113 is a binding site for Mn(2+). Tyr219 carries O-linked (Glc...) tyrosine glycosylation. 3 residues coordinate UDP: His236, Gly239, and Lys242. His236 serves as a coordination point for Mn(2+). UDP-alpha-D-glucose-binding residues include Gly239 and Lys242. Disordered regions lie at residues 379–432 (PSVS…PEMS), 452–476 (YYAH…LPKE), 547–584 (SIQN…PPRH), 611–749 (MSGK…ETVQ), and 768–903 (LPHA…PNTD). Residues 386 to 402 (LTPPPADAAPAPAPAPV) show a composition bias toward pro residues. Positions 404–413 (TQTEQKTAQP) are enriched in polar residues. The segment covering 456 to 469 (PESHRPATEHKEPE) has biased composition (basic and acidic residues). Residues 557 to 566 (AHSQHQSHAT) show a composition bias toward low complexity. A compositionally biased stretch (polar residues) spans 655 to 683 (SLHSLQSVPGTPRTQYSTFGKSPRLTNAR). The segment covering 692-704 (EQPEDSADGDDEN) has biased composition (acidic residues). The segment covering 733–745 (DRWAQTDRVKTVD) has biased composition (basic and acidic residues). Positions 788–798 (SGNGRAGGGGQ) are enriched in gly residues. Residues 800–812 (EAQTQHQSTYYEY) are compositionally biased toward polar residues. Composition is skewed to low complexity over residues 813–824 (QQQHPHSQQSRQ) and 851–875 (HAQG…NPNL).

The protein belongs to the glycosyltransferase 8 family. Glycogenin subfamily. Mn(2+) is required as a cofactor.

Its subcellular location is the cytoplasm. The protein localises to the vacuole. It catalyses the reaction L-tyrosyl-[glycogenin] + UDP-alpha-D-glucose = alpha-D-glucosyl-L-tyrosyl-[glycogenin] + UDP + H(+). It carries out the reaction [1,4-alpha-D-glucosyl](n)-L-tyrosyl-[glycogenin] + UDP-alpha-D-glucose = [1,4-alpha-D-glucosyl](n+1)-L-tyrosyl-[glycogenin] + UDP + H(+). In terms of biological role, self-glucosylating initiator of glycogen synthesis. It catalyzes the formation of a short alpha (1,4)-glucosyl chain covalently attached via a glucose 1-O-tyrosyl linkage to internal tyrosine residues and these chains act as primers for the elongation reaction catalyzed by glycogen synthase. This is Glycogenin from Cryptococcus neoformans var. grubii serotype A (strain H99 / ATCC 208821 / CBS 10515 / FGSC 9487) (Filobasidiella neoformans var. grubii).